The following is an 83-amino-acid chain: Gene 41 protein (83 aa).

This is Gene 41 protein (41) from Mycobacterium phage L5 (Mycobacteriophage L5).